Consider the following 661-residue polypeptide: UvrABC system protein B (661 aa).

The region spanning 26–413 (KGIQEGKKHQ…TDEMVEQIIR (388 aa)) is the Helicase ATP-binding domain. Residue 39–46 (GATGTGKT) coordinates ATP. A Beta-hairpin motif is present at residues 92–115 (YYDYYQPEAYVPQTDTFIEKDASI). Positions 430–596 (QIDDLIGEIQ…TINKEIRDVI (167 aa)) constitute a Helicase C-terminal domain. Residues 625–660 (QKVVEQMEHEMKEAAKALDFERAAELRDLLLELKAE) enclose the UVR domain.

Belongs to the UvrB family. As to quaternary structure, forms a heterotetramer with UvrA during the search for lesions. Interacts with UvrC in an incision complex.

The protein localises to the cytoplasm. In terms of biological role, the UvrABC repair system catalyzes the recognition and processing of DNA lesions. A damage recognition complex composed of 2 UvrA and 2 UvrB subunits scans DNA for abnormalities. Upon binding of the UvrA(2)B(2) complex to a putative damaged site, the DNA wraps around one UvrB monomer. DNA wrap is dependent on ATP binding by UvrB and probably causes local melting of the DNA helix, facilitating insertion of UvrB beta-hairpin between the DNA strands. Then UvrB probes one DNA strand for the presence of a lesion. If a lesion is found the UvrA subunits dissociate and the UvrB-DNA preincision complex is formed. This complex is subsequently bound by UvrC and the second UvrB is released. If no lesion is found, the DNA wraps around the other UvrB subunit that will check the other stand for damage. The protein is UvrABC system protein B of Bacillus subtilis (strain 168).